The following is a 287-amino-acid chain: Inositol diphosphatase siw14 (287 aa).

One can recognise a Tyrosine-protein phosphatase domain in the interval 85–256 (NFGVVYPGII…LNDLKRYISD (172 aa)). Phosphoserine is present on residues S156 and S159. The active-site Phosphocysteine intermediate is the C189.

It belongs to the protein-tyrosine phosphatase family. Atypical dual-specificity phosphatase Siw14-like subfamily.

The protein resides in the cytoplasm. It localises to the nucleus. The enzyme catalyses 5-diphospho-1D-myo-inositol 1,2,3,4,6-pentakisphosphate + H2O = 1D-myo-inositol hexakisphosphate + phosphate + H(+). It carries out the reaction 1-diphospho-1D-myo-inositol 2,3,4,5,6-pentakisphosphate + H2O = 1D-myo-inositol hexakisphosphate + phosphate + H(+). It catalyses the reaction 1,5-bis(diphospho)-1D-myo-inositol 2,3,4,6-tetrakisphosphate + H2O = 1-diphospho-1D-myo-inositol 2,3,4,5,6-pentakisphosphate + phosphate + 2 H(+). Activity is inhibited by the reaction product inorganic phosphate and by sulfate (a phosphate mimetic). Not inhibited by magnesium. Functionally, cleaves the beta-phosphate at the 1- and 5-position of soluble inositol pyrophosphates. Has exopolyphosphatase activity in vitro but does not appear to contribute to the homeostasis of cellular polyphosphate. The polypeptide is Inositol diphosphatase siw14 (Schizosaccharomyces pombe (strain 972 / ATCC 24843) (Fission yeast)).